The sequence spans 450 residues: Caspase Dronc (450 aa).

Residues 1–134 (MQPPELEIGM…RTSRKSADIV (134 aa)) constitute a propeptide that is removed on maturation. Residues 64-109 (EKDVRVEQHRRLLLKITQRGPTAYNLLINALRNINCLDAAVLLESV) form the CARD domain. The interval 114–125 (SRPPFISLNERR) is required for binding Diap1. Catalysis depends on residues histidine 271 and cysteine 318. Residues 321-324 (DEYD) constitute a propeptide that is removed on maturation.

Belongs to the peptidase C14A family. Interacts (via residues 114-125) with Diap1 (via BIR 2 domain); binding blocks Dronc-mediated cell death. Can form a stable complex with Drice. Rpr, hid and grim can out-compete Dronc for binding Diap1, therefore removing Diap1-mediated ubiquitination. Interacts (via CARD domain) with Dark (via Dark CARD and WD domains); the interaction stimulates Dark oligomerization to form the apoptosome and brings pairs of Dronc molecules together on the apoptosome to facilitate their dimerization and activation by autocatalytic cleavage. Binding to Dark stimulates apoptosome assembly. After autocatalytic cleavage the Dronc caspase domain dissociates from the apoptosome but the CARD domain remains associated. In terms of processing, ubiquitinated by Diap1, leading to its subsequent degradation. In terms of tissue distribution, ubiquitously expressed in embryos during early stages of development. In late third instar larvae, dramatic up-regulation in salivary glands and midgut before histolysis of these tissues.

It is found in the cytoplasm. The enzyme catalyses Strict requirement for an Asp residue at position P1 and with a marked preference for His at position P2. It has a preferred cleavage sequence of Leu-Gly-His-Asp-|-Xaa.. Zymogen activated by autocatalytic cleavage; association with the Dark apoptosome brings multiple molecules together to facilitate their dimerization and activation by autocatalytic cleavage. Its function is as follows. Involved in the activation cascade of caspases responsible for apoptosis execution. Effector of steroid-mediated apoptosis during insect metamorphosis. Overexpression promotes programmed cell death. Interaction with Diap1 is required to suppress Dronc-mediated cell death; via Diap1-mediated ubiquitination of Dronc. Rate-limiting caspase in rpr, grim and hid death pathway. Recruited to the Dark apoptosome, an adapter protein complex that mediates activation of the caspase cascade in programmed cell death initiated by the intrinsic apoptosis pathway. Association with the Dark apoptosome stimulates autocatalytic cleavage and activation of Dronc, promoting Dronc-mediated cleavage of downstream effector caspases such as Drice. In Drosophila melanogaster (Fruit fly), this protein is Caspase Dronc.